The chain runs to 571 residues: Germacrene B synthase TPS16CC (571 aa).

(2E,6E)-farnesyl diphosphate is bound by residues Arg-287, Asp-324, Asp-328, Arg-465, and Asp-468. Residues Asp-324 and Asp-328 each contribute to the Mg(2+) site. A DDXXD motif motif is present at residues 324–328; the sequence is DDIYD. Mg(2+) contacts are provided by Asp-468, Ser-472, and Glu-476.

This sequence belongs to the terpene synthase family. Tpsb subfamily. Mg(2+) is required as a cofactor. It depends on Mn(2+) as a cofactor. As to expression, highly expressed in glandular trichomes.

It catalyses the reaction (2E,6E)-farnesyl diphosphate = (1E,4E)-germacrene B + diphosphate. Its pathway is secondary metabolite biosynthesis; terpenoid biosynthesis. Involved in sesquiterpene olefins biosynthesis, constituants of cannabinoids and terpenoids-rich resins. Catalyzes mainly the conversion of (2E)-farnesyl diphosphate to germacrene B, which is spontaneously converted to gamma-elemene as a thermal degradation product. The chain is Germacrene B synthase TPS16CC from Cannabis sativa (Hemp).